The sequence spans 550 residues: Protein UshA (550 aa).

Positions 1 to 25 (MKLLQRGVALALLTTFTLASETALA) are cleaved as a signal peptide. Residues D41, H43, D84, N116, H217, H252, and Q254 each coordinate Zn(2+). C258 and C275 are disulfide-bonded. Residues 375 to 379 (RDKVR) and 498 to 504 (FNATGGD) contribute to the substrate site.

Belongs to the 5'-nucleotidase family. In terms of assembly, monomer. Zn(2+) is required as a cofactor.

Its subcellular location is the periplasm. It catalyses the reaction UDP-sugar + H2O = UMP + alpha-D-aldose 1-phosphate.. The enzyme catalyses a ribonucleoside 5'-phosphate + H2O = a ribonucleoside + phosphate. With respect to regulation, the activity of this protein is inhibited by an intracellular protein inhibitor. Degradation of external UDP-glucose to uridine monophosphate and glucose-1-phosphate, which can then be used by the cell. The chain is Protein UshA (ushA) from Escherichia coli (strain K12).